Consider the following 89-residue polypeptide: Small ribosomal subunit protein uS15 (89 aa).

Belongs to the universal ribosomal protein uS15 family. As to quaternary structure, part of the 30S ribosomal subunit. Forms a bridge to the 50S subunit in the 70S ribosome, contacting the 23S rRNA.

One of the primary rRNA binding proteins, it binds directly to 16S rRNA where it helps nucleate assembly of the platform of the 30S subunit by binding and bridging several RNA helices of the 16S rRNA. Its function is as follows. Forms an intersubunit bridge (bridge B4) with the 23S rRNA of the 50S subunit in the ribosome. The polypeptide is Small ribosomal subunit protein uS15 (Saccharopolyspora erythraea (strain ATCC 11635 / DSM 40517 / JCM 4748 / NBRC 13426 / NCIMB 8594 / NRRL 2338)).